Reading from the N-terminus, the 715-residue chain is MIYQGKAITVKPLEGGIVELNFDLKGESVNKFNRLTLSELRAAVDAIKADASVKGVIVTSGKDVFIVGADITEFVDNFQLPDEELMAGNLEANKIFSDFEDLDVPTVAAINGIALGGGLEMCLAADFRVMSATAKVGLPEVKLGIYPGFGGTVRLPRLIGCDNAVEWIASGKENKAEDALKVGAVDAVVAPEQLQAAALDLAKRAVAGELDHKARRQPKLEKLKLNAIEQMMAFETAKGFVAGQAGPNYPAPVEAIKSIQKAANFGRDKALEVEAAGFVKLAKTSVAQSLIGLFLNDQELKKKAKKYDEVAKDVKLAAVLGAGIMGGGIAYQSALKGTPILMKDIREEGIQMGLNEAAKLLGKRVEKGRLTPAKMAEALNGIRPTMSYGDFGNVDIVVEAVVENPKVKQAVLAEVEGAVKEDAIIASNTSTISISLLAQALKRPENFCGMHFFNPVHMMPLVEVIRGEKTGETAIATTVAYAKKMGKSPIVVNDCPGFLVNRVLFPYFGGFAKLLSFGVDFVRIDKVMEKFGWPMGPAYLSDVVGIDTGHHGRDVMAEGFPDRMAVEGKTAVDVMYEANRLGQKNGKGFYAYETDKRGKPKKVTDPQAYEVLKPIVVEQREVTDEDIVNFMMIPLCLETVRCLEDGIVETAAEADMGLIYGIGFPPFRGGALRYIDSIGVAEFVALADKYAELGALYHPTAKLREMAKNGQKFFG.

Positions 1–190 (MIYQGKAITV…KVGAVDAVVA (190 aa)) are enoyl-CoA hydratase/isomerase. Asp-297 is a binding site for substrate. The tract at residues 312 to 715 (KDVKLAAVLG…MAKNGQKFFG (404 aa)) is 3-hydroxyacyl-CoA dehydrogenase. NAD(+) contacts are provided by residues Met-325, Asp-344, 401–403 (VVE), Lys-408, and Ser-430. His-451 acts as the For 3-hydroxyacyl-CoA dehydrogenase activity in catalysis. Asn-454 is an NAD(+) binding site. Residues Asn-501 and Tyr-660 each contribute to the substrate site.

The protein in the N-terminal section; belongs to the enoyl-CoA hydratase/isomerase family. In the C-terminal section; belongs to the 3-hydroxyacyl-CoA dehydrogenase family. Heterotetramer of two alpha chains (FadB) and two beta chains (FadA).

The enzyme catalyses a (3S)-3-hydroxyacyl-CoA + NAD(+) = a 3-oxoacyl-CoA + NADH + H(+). It carries out the reaction a (3S)-3-hydroxyacyl-CoA = a (2E)-enoyl-CoA + H2O. It catalyses the reaction a 4-saturated-(3S)-3-hydroxyacyl-CoA = a (3E)-enoyl-CoA + H2O. The catalysed reaction is (3S)-3-hydroxybutanoyl-CoA = (3R)-3-hydroxybutanoyl-CoA. The enzyme catalyses a (3Z)-enoyl-CoA = a 4-saturated (2E)-enoyl-CoA. It carries out the reaction a (3E)-enoyl-CoA = a 4-saturated (2E)-enoyl-CoA. It functions in the pathway lipid metabolism; fatty acid beta-oxidation. Functionally, involved in the aerobic and anaerobic degradation of long-chain fatty acids via beta-oxidation cycle. Catalyzes the formation of 3-oxoacyl-CoA from enoyl-CoA via L-3-hydroxyacyl-CoA. It can also use D-3-hydroxyacyl-CoA and cis-3-enoyl-CoA as substrate. This chain is Fatty acid oxidation complex subunit alpha, found in Pseudomonas aeruginosa (strain LESB58).